Reading from the N-terminus, the 495-residue chain is Probable cytosol aminopeptidase (495 aa).

Mn(2+) contacts are provided by Lys266 and Asp271. The active site involves Lys278. Mn(2+) is bound by residues Asp289, Asp348, and Glu350. Arg352 is a catalytic residue.

This sequence belongs to the peptidase M17 family. It depends on Mn(2+) as a cofactor.

Its subcellular location is the cytoplasm. The enzyme catalyses Release of an N-terminal amino acid, Xaa-|-Yaa-, in which Xaa is preferably Leu, but may be other amino acids including Pro although not Arg or Lys, and Yaa may be Pro. Amino acid amides and methyl esters are also readily hydrolyzed, but rates on arylamides are exceedingly low.. The catalysed reaction is Release of an N-terminal amino acid, preferentially leucine, but not glutamic or aspartic acids.. Its function is as follows. Presumably involved in the processing and regular turnover of intracellular proteins. Catalyzes the removal of unsubstituted N-terminal amino acids from various peptides. This chain is Probable cytosol aminopeptidase, found in Pseudomonas aeruginosa (strain UCBPP-PA14).